A 48-amino-acid chain; its full sequence is Large ribosomal subunit protein eL40 (48 aa).

This sequence belongs to the eukaryotic ribosomal protein eL40 family.

In Methanobrevibacter smithii (strain ATCC 35061 / DSM 861 / OCM 144 / PS), this protein is Large ribosomal subunit protein eL40.